Here is a 466-residue protein sequence, read N- to C-terminus: Probable aminotransferase Rv3329 (466 aa).

An N6-(pyridoxal phosphate)lysine modification is found at Lys-294.

This sequence belongs to the class-III pyridoxal-phosphate-dependent aminotransferase family. It depends on pyridoxal 5'-phosphate as a cofactor.

Functionally, probable aminotransferase. The chain is Probable aminotransferase Rv3329 from Mycobacterium tuberculosis (strain ATCC 25618 / H37Rv).